Consider the following 85-residue polypeptide: Small ribosomal subunit protein bS18c (85 aa).

This sequence belongs to the bacterial ribosomal protein bS18 family. Part of the 30S ribosomal subunit.

It localises to the plastid. The protein resides in the chloroplast. The polypeptide is Small ribosomal subunit protein bS18c (Tupiella akineta (Green alga)).